Consider the following 147-residue polypeptide: Hemoglobin subunit gamma-2 (147 aa).

One can recognise a Globin domain in the interval 3–147 (NFTAEDKAAI…VASALGSRYH (145 aa)). Phosphothreonine is present on Thr-13. A phosphoserine mark is found at Ser-45, Ser-51, and Ser-53. Lys-60 is subject to N6-acetyllysine. Position 64 (His-64) interacts with heme b. N6-acetyllysine is present on Lys-83. Position 93 (His-93) interacts with heme b. Cys-94 is modified (S-nitrosocysteine). 2 positions are modified to phosphoserine: Ser-140 and Ser-144.

The protein belongs to the globin family. Heterotetramer of two alpha chains and two gamma chains in fetal hemoglobin (Hb F). In terms of tissue distribution, red blood cells.

Gamma chains make up the fetal hemoglobin F, in combination with alpha chains. The sequence is that of Hemoglobin subunit gamma-2 (HBG2) from Cebus albifrons (White-fronted capuchin).